The sequence spans 179 residues: ATP synthase subunit delta (179 aa).

The protein belongs to the ATPase delta chain family. As to quaternary structure, F-type ATPases have 2 components, F(1) - the catalytic core - and F(0) - the membrane proton channel. F(1) has five subunits: alpha(3), beta(3), gamma(1), delta(1), epsilon(1). F(0) has three main subunits: a(1), b(2) and c(10-14). The alpha and beta chains form an alternating ring which encloses part of the gamma chain. F(1) is attached to F(0) by a central stalk formed by the gamma and epsilon chains, while a peripheral stalk is formed by the delta and b chains.

Its subcellular location is the cell inner membrane. Its function is as follows. F(1)F(0) ATP synthase produces ATP from ADP in the presence of a proton or sodium gradient. F-type ATPases consist of two structural domains, F(1) containing the extramembraneous catalytic core and F(0) containing the membrane proton channel, linked together by a central stalk and a peripheral stalk. During catalysis, ATP synthesis in the catalytic domain of F(1) is coupled via a rotary mechanism of the central stalk subunits to proton translocation. This protein is part of the stalk that links CF(0) to CF(1). It either transmits conformational changes from CF(0) to CF(1) or is implicated in proton conduction. This Burkholderia orbicola (strain MC0-3) protein is ATP synthase subunit delta.